The chain runs to 396 residues: Protein NDRG1-A (396 aa).

The disordered stretch occupies residues 326-396 (RSRTGSAASS…NSPKSMEVSC (71 aa)). Residues 327–340 (SRTGSAASSSSQDG) show a composition bias toward low complexity. 4 repeat units span residues 340–349 (GNRSRSHTNE), 350–359 (GSRSRSHTGD), 360–369 (GNRSRAHTGD), and 370–379 (GNRSRSHTDT). A 4 X 10 AA tandem repeats of G-[NS]-R-S-R-[AS]-H-T-[DGN]-[DET] region spans residues 340–379 (GNRSRSHTNEGSRSRSHTGDGNRSRAHTGDGNRSRSHTDT). Basic and acidic residues predominate over residues 346–377 (HTNEGSRSRSHTGDGNRSRAHTGDGNRSRSHT). Polar residues predominate over residues 378–390 (DTNNINSDQNSPK).

The protein belongs to the NDRG family.

Its function is as follows. May be involved in pronephros development, after specification of the pronephros. This Xenopus laevis (African clawed frog) protein is Protein NDRG1-A (ndrg1-a).